The primary structure comprises 491 residues: GTPase Der (491 aa).

An EngA-type G 1 domain is found at 3–166 (PVIALVGRPN…AALGIFPRDD (164 aa)). GTP-binding positions include 9 to 16 (GRPNVGKS), 56 to 60 (DTGGI), and 118 to 121 (NKVD). Residues 164–191 (RDDEGEEGEGEAEVVAEGEEPKRVPGPS) are disordered. The segment covering 166-181 (DEGEEGEGEAEVVAEG) has biased composition (acidic residues). Residues 182–191 (EEPKRVPGPS) show a composition bias toward basic and acidic residues. Positions 196–369 (IKIAIIGRPN…SVQAAFQSAV (174 aa)) constitute an EngA-type G 2 domain. GTP contacts are provided by residues 202-209 (GRPNVGKS), 249-253 (DTAGV), and 314-317 (NKWD). Residues 370-454 (TRWPTSRLTR…PIRIEYKGGD (85 aa)) form the KH-like domain. Residues 452–464 (GGDNPYEGKKNSL) show a composition bias toward basic and acidic residues. The tract at residues 452–491 (GGDNPYEGKKNSLTERQVNKKRRLMSHHKKAEKKRRDKKR) is disordered. Positions 470 to 491 (NKKRRLMSHHKKAEKKRRDKKR) are enriched in basic residues.

The protein belongs to the TRAFAC class TrmE-Era-EngA-EngB-Septin-like GTPase superfamily. EngA (Der) GTPase family. As to quaternary structure, associates with the 50S ribosomal subunit.

Its function is as follows. GTPase that plays an essential role in the late steps of ribosome biogenesis. The protein is GTPase Der of Azotobacter vinelandii (strain DJ / ATCC BAA-1303).